A 268-amino-acid chain; its full sequence is Hydroxyethylthiazole kinase (268 aa).

M47 lines the substrate pocket. Positions 123 and 170 each coordinate ATP. A196 is a substrate binding site.

Belongs to the Thz kinase family. Requires Mg(2+) as cofactor.

The enzyme catalyses 5-(2-hydroxyethyl)-4-methylthiazole + ATP = 4-methyl-5-(2-phosphooxyethyl)-thiazole + ADP + H(+). The protein operates within cofactor biosynthesis; thiamine diphosphate biosynthesis; 4-methyl-5-(2-phosphoethyl)-thiazole from 5-(2-hydroxyethyl)-4-methylthiazole: step 1/1. Functionally, catalyzes the phosphorylation of the hydroxyl group of 4-methyl-5-beta-hydroxyethylthiazole (THZ). The polypeptide is Hydroxyethylthiazole kinase (Finegoldia magna (strain ATCC 29328 / DSM 20472 / WAL 2508) (Peptostreptococcus magnus)).